The following is a 164-amino-acid chain: Crossover junction endodeoxyribonuclease RuvC (164 aa).

Catalysis depends on residues aspartate 7, glutamate 67, and aspartate 139. Aspartate 7, glutamate 67, and aspartate 139 together coordinate Mg(2+).

It belongs to the RuvC family. Homodimer which binds Holliday junction (HJ) DNA. The HJ becomes 2-fold symmetrical on binding to RuvC with unstacked arms; it has a different conformation from HJ DNA in complex with RuvA. In the full resolvosome a probable DNA-RuvA(4)-RuvB(12)-RuvC(2) complex forms which resolves the HJ. Requires Mg(2+) as cofactor.

It is found in the cytoplasm. The catalysed reaction is Endonucleolytic cleavage at a junction such as a reciprocal single-stranded crossover between two homologous DNA duplexes (Holliday junction).. In terms of biological role, the RuvA-RuvB-RuvC complex processes Holliday junction (HJ) DNA during genetic recombination and DNA repair. Endonuclease that resolves HJ intermediates. Cleaves cruciform DNA by making single-stranded nicks across the HJ at symmetrical positions within the homologous arms, yielding a 5'-phosphate and a 3'-hydroxyl group; requires a central core of homology in the junction. The consensus cleavage sequence is 5'-(A/T)TT(C/G)-3'. Cleavage occurs on the 3'-side of the TT dinucleotide at the point of strand exchange. HJ branch migration catalyzed by RuvA-RuvB allows RuvC to scan DNA until it finds its consensus sequence, where it cleaves and resolves the cruciform DNA. The sequence is that of Crossover junction endodeoxyribonuclease RuvC from Geobacter sulfurreducens (strain ATCC 51573 / DSM 12127 / PCA).